The primary structure comprises 145 residues: Cell division protein SepF (145 aa).

The span at 23-41 shows a compositional bias: basic and acidic residues; the sequence is PQEVSKTKDENAKPKHETP. The disordered stretch occupies residues 23–42; sequence PQEVSKTKDENAKPKHETPK.

Belongs to the SepF family. Homodimer. Interacts with FtsZ.

The protein localises to the cytoplasm. Functionally, cell division protein that is part of the divisome complex and is recruited early to the Z-ring. Probably stimulates Z-ring formation, perhaps through the cross-linking of FtsZ protofilaments. Its function overlaps with FtsA. This Caldicellulosiruptor bescii (strain ATCC BAA-1888 / DSM 6725 / KCTC 15123 / Z-1320) (Anaerocellum thermophilum) protein is Cell division protein SepF.